A 533-amino-acid polypeptide reads, in one-letter code: DEAD-box ATP-dependent RNA helicase CshA (533 aa).

A Q motif motif is present at residues 2 to 30; the sequence is TTFRELGLSDSLLQSVESMGFEEATPIQA. A Helicase ATP-binding domain is found at 33–203; sequence IPHALQGKDI…ERFMTEPQHI (171 aa). An ATP-binding site is contributed by 46–53; the sequence is AQTGTGKT. The DEAD box motif lies at 151-154; it reads DEAD. Residues 214–374 enclose the Helicase C-terminal domain; sequence NIQQFYLEVQ…RMDAPTLDEA (161 aa). Positions 428 to 533 are disordered; the sequence is TTPIALTSEP…ERKHHSRPQA (106 aa). The span at 458–512 shows a compositional bias: basic and acidic residues; that stretch reads DGNRNRSRDGRGGGDGRNRDRNRDGRNRDGNRDRNRDGNRDRNRDGGSRGRRGEG. The segment covering 524–533 has biased composition (basic residues); that stretch reads ERKHHSRPQA.

This sequence belongs to the DEAD box helicase family. CshA subfamily. In terms of assembly, oligomerizes, may be a member of the RNA degradosome.

The protein resides in the cytoplasm. It catalyses the reaction ATP + H2O = ADP + phosphate + H(+). Its function is as follows. DEAD-box RNA helicase possibly involved in RNA degradation. May work in conjunction with the cold shock proteins to ensure proper initiation of transcription at low and optimal temperatures. Unwinds dsRNA in both 5'- and 3'-directions and shows RNA-dependent ATPase activity. Probably has a somewhat redundant function with cshB, as cshA can partially complement the growth effects of a cshB deletion. Plays a role in adaptation to cold, oxididant and pH stress. The polypeptide is DEAD-box ATP-dependent RNA helicase CshA (Bacillus cereus (strain ATCC 14579 / DSM 31 / CCUG 7414 / JCM 2152 / NBRC 15305 / NCIMB 9373 / NCTC 2599 / NRRL B-3711)).